The following is a 411-amino-acid chain: Phospholipase ABHD3 (411 aa).

A helical; Signal-anchor for type II membrane protein membrane pass occupies residues 25-45 (VGFFGSGVGLSLILGFSVAYA). Residues 140–233 (PTILLLPGLT…MLLLNYLGKI (94 aa)) enclose the AB hydrolase-1 domain. Active-site charge relay system residues include Ser-220, Asp-346, and His-375.

It belongs to the AB hydrolase superfamily. AB hydrolase 4 family. In terms of tissue distribution, widely expressed with higher expression in liver.

Its subcellular location is the membrane. The enzyme catalyses a 1,2-diacyl-sn-glycero-3-phosphocholine + H2O = a 1-acyl-sn-glycero-3-phosphocholine + a fatty acid + H(+). The catalysed reaction is a 1,2-diacyl-sn-glycero-3-phosphocholine + H2O = a 2-acyl-sn-glycero-3-phosphocholine + a fatty acid + H(+). It carries out the reaction 1-tetradecanoyl-2-(9Z,12Z-octadecadienoyl)-sn-glycero-3-phosphocholine + H2O = 2-(9Z,12Z-octadecadienoyl)-sn-glycero-3-phosphocholine + tetradecanoate + H(+). It catalyses the reaction 1-tetradecanoyl-2-(9Z,12Z-octadecadienoyl)-sn-glycero-3-phosphocholine + H2O = 1-tetradecanoyl-sn-glycero-3-phosphocholine + (9Z,12Z)-octadecadienoate + H(+). The enzyme catalyses 1-tetradecanoyl-2-(5Z,8Z,11Z,14Z-eicosatetraenoyl)-sn-glycero-3-phosphocholine + H2O = 2-(5Z,8Z,11Z,14Z)-eicosatetraenoyl-sn-glycero-3-phosphocholine + tetradecanoate + H(+). The catalysed reaction is 1-tetradecanoyl-2-(4Z,7Z,10Z,13Z,16Z,19Z-docosahexaenoyl)-sn-glycero-3-phosphocholine + H2O = 2-(4Z,7Z,10Z,13Z,16Z,19Z-docosahexaenoyl)-sn-glycero-3-phosphocholine + tetradecanoate + H(+). It carries out the reaction 1,2-ditetradecanoyl-sn-glycero-3-phosphocholine + H2O = 2-tetradecanoyl-sn-glycero-3-phosphocholine + tetradecanoate + H(+). It catalyses the reaction 1-octadecanoyl-2-acetyl-sn-glycero-3-phosphocholine + H2O = 1-octadecanoyl-sn-glycero-3-phosphocholine + acetate + H(+). The enzyme catalyses 1,2-ditetradecanoyl-sn-glycero-3-phosphocholine + H2O = 1-tetradecanoyl-sn-glycero-3-phosphocholine + tetradecanoate + H(+). The catalysed reaction is 1-octadecanoyl-2-pentanoyl-sn-glycero-3-phosphocholine + H2O = pentanoate + 1-octadecanoyl-sn-glycero-3-phosphocholine + H(+). It carries out the reaction 1-octadecanoyl-2-hexanoyl-sn-glycero-3-phosphocholine + H2O = hexanoate + 1-octadecanoyl-sn-glycero-3-phosphocholine + H(+). It catalyses the reaction 1-octadecanoyl-2-octanoyl-sn-glycero-3-phosphocholine + H2O = 1-octadecanoyl-sn-glycero-3-phosphocholine + octanoate + H(+). The enzyme catalyses 1-octadecanoyl-2-nonanoyl-sn-glycero-3-phosphocholine + H2O = nonanoate + 1-octadecanoyl-sn-glycero-3-phosphocholine + H(+). The catalysed reaction is 1-O-hexadecyl-2-nonadioyl-sn-glycero-3-phosphocholine + H2O = nonanedioate + 1-O-hexadecyl-sn-glycero-3-phosphocholine + H(+). It carries out the reaction 1-hexadecanoyl-2-nonadioyl-sn-glycero-3-phosphocholine + H2O = nonanedioate + 1-hexadecanoyl-sn-glycero-3-phosphocholine + H(+). It catalyses the reaction 1-hexadecanoyl-2-(9-oxononanoyl)-sn-glycero-3-phosphocholine + H2O = 9-oxononanoate + 1-hexadecanoyl-sn-glycero-3-phosphocholine + H(+). The enzyme catalyses 1-hexadecanoyl-2-(5-oxopentanoyl)-sn-glycero-3-phosphocholine + H2O = 5-oxopentanoate + 1-hexadecanoyl-sn-glycero-3-phosphocholine + H(+). The catalysed reaction is 1-hexadecanoyl-2-glutaroyl-sn-glycero-3-phosphocholine + H2O = glutarate + 1-hexadecanoyl-sn-glycero-3-phosphocholine + H(+). It carries out the reaction 1-O-hexadecyl-2-acetyl-sn-glycero-3-phosphocholine + H2O = 1-O-hexadecyl-sn-glycero-3-phosphocholine + acetate + H(+). In terms of biological role, phospholipase that may play a role in phospholipids remodeling. May selectively cleave myristate (C14)-containing phosphatidylcholines through its predominant phospholipase 1 activity, cleaving preferentially acyl groups in sn1 position. In parallel, may have a minor phospholipase 2 activity acting on acyl groups in position sn2. In addition to (C14)-containing phosphatidylcholines, may also act on other medium-chain-containing and oxidatively truncated phospholipids. The protein is Phospholipase ABHD3 of Mus musculus (Mouse).